The primary structure comprises 671 residues: UBA domain-containing protein RUP1 (671 aa).

In terms of domain architecture, UBA spans 1-41; sequence MMDNQAVKSLLEMGIPHEVAVDALQRTGGNLEAAVNFIFSN. A Phosphoserine modification is found at Ser56. Residues 68–87 form a disordered region; it reads GTKPCDVPNNGDQDIDMPDV. Residues 432-501 are a coiled coil; sequence SKRKQARTRS…LNSARAAKME (70 aa). Residues 643–671 are disordered; it reads DGMGDPEQATNNINNGNDNDNDDDIDSDN. Over residues 661–671 the composition is skewed to acidic residues; it reads NDNDDDIDSDN.

As to quaternary structure, forms a ternary complex with RSP5 and UBP2.

Its subcellular location is the cytoplasm. It localises to the nucleus. Modulates the activity of the RSP5 HECT ubiquitin-protein ligase through its mediation of the interaction between RSP5 and the deubiquitinase UBP2. Involved in regulation of cell wall homeostasis. This is UBA domain-containing protein RUP1 (RUP1) from Saccharomyces cerevisiae (strain ATCC 204508 / S288c) (Baker's yeast).